The primary structure comprises 217 residues: Phosphatidylserine decarboxylase proenzyme (217 aa).

The active-site Schiff-base intermediate with substrate; via pyruvic acid is Ser-182. Ser-182 carries the post-translational modification Pyruvic acid (Ser); by autocatalysis.

Belongs to the phosphatidylserine decarboxylase family. PSD-A subfamily. Heterodimer of a large membrane-associated beta subunit and a small pyruvoyl-containing alpha subunit. It depends on pyruvate as a cofactor. Post-translationally, is synthesized initially as an inactive proenzyme. Formation of the active enzyme involves a self-maturation process in which the active site pyruvoyl group is generated from an internal serine residue via an autocatalytic post-translational modification. Two non-identical subunits are generated from the proenzyme in this reaction, and the pyruvate is formed at the N-terminus of the alpha chain, which is derived from the carboxyl end of the proenzyme. The post-translation cleavage follows an unusual pathway, termed non-hydrolytic serinolysis, in which the side chain hydroxyl group of the serine supplies its oxygen atom to form the C-terminus of the beta chain, while the remainder of the serine residue undergoes an oxidative deamination to produce ammonia and the pyruvoyl prosthetic group on the alpha chain.

The protein resides in the cell membrane. It carries out the reaction a 1,2-diacyl-sn-glycero-3-phospho-L-serine + H(+) = a 1,2-diacyl-sn-glycero-3-phosphoethanolamine + CO2. It functions in the pathway phospholipid metabolism; phosphatidylethanolamine biosynthesis; phosphatidylethanolamine from CDP-diacylglycerol: step 2/2. In terms of biological role, catalyzes the formation of phosphatidylethanolamine (PtdEtn) from phosphatidylserine (PtdSer). The protein is Phosphatidylserine decarboxylase proenzyme of Prosthecochloris aestuarii (strain DSM 271 / SK 413).